The chain runs to 345 residues: Phosphate acyltransferase (345 aa).

It belongs to the PlsX family. In terms of assembly, homodimer. Probably interacts with PlsY.

The protein localises to the cytoplasm. It catalyses the reaction a fatty acyl-[ACP] + phosphate = an acyl phosphate + holo-[ACP]. Its pathway is lipid metabolism; phospholipid metabolism. Catalyzes the reversible formation of acyl-phosphate (acyl-PO(4)) from acyl-[acyl-carrier-protein] (acyl-ACP). This enzyme utilizes acyl-ACP as fatty acyl donor, but not acyl-CoA. The polypeptide is Phosphate acyltransferase (Trichlorobacter lovleyi (strain ATCC BAA-1151 / DSM 17278 / SZ) (Geobacter lovleyi)).